The chain runs to 500 residues: Lysine--tRNA ligase (500 aa).

Mg(2+)-binding residues include glutamate 410 and glutamate 417.

Belongs to the class-II aminoacyl-tRNA synthetase family. In terms of assembly, homodimer. Mg(2+) serves as cofactor.

The protein localises to the cytoplasm. It catalyses the reaction tRNA(Lys) + L-lysine + ATP = L-lysyl-tRNA(Lys) + AMP + diphosphate. This Shewanella loihica (strain ATCC BAA-1088 / PV-4) protein is Lysine--tRNA ligase.